A 287-amino-acid polypeptide reads, in one-letter code: MYIQDVIMNLEKFWSDFGCVIDQPYDIEMGAGTYSPATFFRSFGANEWRVAYTQPCRRPTDGRYGENPNRMQRFYQYQVVLKPSPKDVQDLYIRSLESLGISPKEHDIRFVEDNWESPTLGAWGVGWEVWLDGMEITQFTYFQQMGGIPLTYIPVELTYGIERIAMYLQNIDNVYETKWNKNVKYKDIYKENERQFSYYNFEEADIDMLKTLYNMYKKEFQRLIAKQLYLPAYDYLAKSAHVFNLMDARNAIGVNERHQYILDIRNMAKSCAKLYIDSSNAEVIDVE.

It belongs to the class-II aminoacyl-tRNA synthetase family. Tetramer of two alpha and two beta subunits.

The protein resides in the cytoplasm. It catalyses the reaction tRNA(Gly) + glycine + ATP = glycyl-tRNA(Gly) + AMP + diphosphate. This chain is Glycine--tRNA ligase alpha subunit, found in Petrotoga mobilis (strain DSM 10674 / SJ95).